A 418-amino-acid polypeptide reads, in one-letter code: Glutamyl-tRNA(Gln) amidotransferase subunit D (418 aa).

An Asparaginase/glutaminase domain is found at 81-407 (PDVKIISTGG…EEAKEMVKKS (327 aa)). Catalysis depends on residues Thr-91, Thr-166, Asp-167, and Lys-243.

This sequence belongs to the asparaginase 1 family. GatD subfamily. Heterodimer of GatD and GatE.

The catalysed reaction is L-glutamyl-tRNA(Gln) + L-glutamine + ATP + H2O = L-glutaminyl-tRNA(Gln) + L-glutamate + ADP + phosphate + H(+). Its function is as follows. Allows the formation of correctly charged Gln-tRNA(Gln) through the transamidation of misacylated Glu-tRNA(Gln) in organisms which lack glutaminyl-tRNA synthetase. The reaction takes place in the presence of glutamine and ATP through an activated gamma-phospho-Glu-tRNA(Gln). The GatDE system is specific for glutamate and does not act on aspartate. This chain is Glutamyl-tRNA(Gln) amidotransferase subunit D, found in Archaeoglobus fulgidus (strain ATCC 49558 / DSM 4304 / JCM 9628 / NBRC 100126 / VC-16).